A 233-amino-acid chain; its full sequence is Pyridoxal phosphate homeostasis protein (233 aa).

The residue at position 36 (Lys36) is an N6-(pyridoxal phosphate)lysine.

The protein belongs to the pyridoxal phosphate-binding protein YggS/PROSC family.

Pyridoxal 5'-phosphate (PLP)-binding protein, which is involved in PLP homeostasis. The sequence is that of Pyridoxal phosphate homeostasis protein from Vibrio alginolyticus.